The primary structure comprises 360 residues: sn-glycerol-3-phosphate import ATP-binding protein UgpC (360 aa).

The ABC transporter domain maps to 4-235 (LSLKGVRKSY…PATTFVASFI (232 aa)). 37–44 (GPSGCGKS) is an ATP binding site.

It belongs to the ABC transporter superfamily. sn-glycerol-3-phosphate importer (TC 3.A.1.1.3) family. As to quaternary structure, the complex is composed of two ATP-binding proteins (UgpC), two transmembrane proteins (UgpA and UgpE) and a solute-binding protein (UgpB).

It is found in the cell inner membrane. It catalyses the reaction sn-glycerol 3-phosphate(out) + ATP + H2O = sn-glycerol 3-phosphate(in) + ADP + phosphate + H(+). Functionally, part of the ABC transporter complex UgpBAEC involved in sn-glycerol-3-phosphate (G3P) import. Responsible for energy coupling to the transport system. In Burkholderia pseudomallei (strain K96243), this protein is sn-glycerol-3-phosphate import ATP-binding protein UgpC.